Reading from the N-terminus, the 308-residue chain is UDP-N-acetylenolpyruvoylglucosamine reductase (308 aa).

Positions 22-185 constitute an FAD-binding PCMH-type domain; the sequence is RVGGPADWLF…TEATFRAEAG (164 aa). Arg165 is an active-site residue. Residues 197–211 show a composition bias toward basic and acidic residues; that stretch reads QIARRDSSQPTKERS. Positions 197–228 are disordered; it reads QIARRDSSQPTKERSAGSTFRNPAGFSSTGRA. Polar residues predominate over residues 212-226; it reads AGSTFRNPAGFSSTG. Catalysis depends on Ser214, which acts as the Proton donor. Glu296 is a catalytic residue.

It belongs to the MurB family. Requires FAD as cofactor.

It localises to the cytoplasm. The enzyme catalyses UDP-N-acetyl-alpha-D-muramate + NADP(+) = UDP-N-acetyl-3-O-(1-carboxyvinyl)-alpha-D-glucosamine + NADPH + H(+). The protein operates within cell wall biogenesis; peptidoglycan biosynthesis. In terms of biological role, cell wall formation. The chain is UDP-N-acetylenolpyruvoylglucosamine reductase from Cereibacter sphaeroides (strain ATCC 17029 / ATH 2.4.9) (Rhodobacter sphaeroides).